A 420-amino-acid polypeptide reads, in one-letter code: MAP kinase-interacting serine/threonine-protein kinase 1 (420 aa).

A disordered region spans residues 1–25; that stretch reads MGSSEPIPIAESDKRKKKKRKARAT. S27 carries the phosphoserine; by PAK2 modification. A Protein kinase domain is found at 37 to 321; it reads KLTSELLGEG…AAQVLQHPWV (285 aa). ATP contacts are provided by residues 43–51 and K66; that span reads LGEGANAKV. D158 (proton acceptor) is an active-site residue. 2 positions are modified to phosphoserine: S168 and S173. T197, T202, and T332 each carry phosphothreonine. The disordered stretch occupies residues 386 to 420; sequence LSPPSKSRLARRRALAQAGRSGDAPPSPTPTTPAP. The segment covering 400–409 has biased composition (low complexity); it reads LAQAGRSGDA. The segment covering 410 to 420 has biased composition (pro residues); it reads PPSPTPTTPAP.

This sequence belongs to the protein kinase superfamily. CAMK Ser/Thr protein kinase family. As to quaternary structure, interacts with the C-terminal regions of EIF4G1 and EIF4G2. Also binds to dephosphorylated ERK1 and ERK2, and to the p38 kinases. Mg(2+) is required as a cofactor. In terms of processing, dual phosphorylation of Thr-197 and Thr-202 activates the kinase. Phosphorylation of Thr-332 activates the kinase. MAPK3/ERK1 is one of the kinases which activate MKNK1/MNK1. Phosphorylation by PAK2 leads to a reduced phosphorylation of EIF4G1.

The enzyme catalyses L-seryl-[protein] + ATP = O-phospho-L-seryl-[protein] + ADP + H(+). It carries out the reaction L-threonyl-[protein] + ATP = O-phospho-L-threonyl-[protein] + ADP + H(+). Its activity is regulated as follows. Phosphorylated and activated by the p38 kinases and kinases in the Erk pathway. Functionally, may play a role in the response to environmental stress and cytokines. Appears to regulate translation by phosphorylating EIF4E, thus increasing the affinity of this protein for the 7-methylguanosine-containing mRNA cap. The protein is MAP kinase-interacting serine/threonine-protein kinase 1 (MKNK1) of Bos taurus (Bovine).